A 337-amino-acid polypeptide reads, in one-letter code: MRGFLMFTSGPFDIDFVVLWVDGSDEKWLQKRAIYSSTKQQNNAVRFRDYGIFKYWFRAVAKYAPWVHHVYLVTDEQIPNWLSIQNSKVSVIDHKSIMPEDALPTFNSSAIELNIANIPGLSEHFVYFNDDMFLNRQVTPMDFFSEDGLPKDSAVQNAIMPVEDFDHMTANNVMLINQNFNKYQVLRRHPFRFFNFRYGFLNVLSICLLPWPRFTRFQDPHVPISFRKSVFEKVLNLHRDAWNETSHNRFRNRNDNTIWLIRYYQLVTAQFNPRTPFVGKKYNIGEMKKIVNDINTGKHKMICINDQNVSMAEFDNLTKQLRSTFRSKLPQKSEFEK.

It belongs to the stealth family.

In Lactiplantibacillus plantarum (strain ATCC BAA-793 / NCIMB 8826 / WCFS1) (Lactobacillus plantarum), this protein is Exopolysaccharide phosphotransferase cps2G (cps2G).